We begin with the raw amino-acid sequence, 95 residues long: MAKRYGPKIEDPHDVLLYPVATEKAMRLMEAENKLTFIVRRDANKPLIKKAVEELFDVEVEKVNTLITPTGEKKAYVKLKPEYRAEDVAVDLGIL.

It belongs to the universal ribosomal protein uL23 family. As to quaternary structure, part of the 50S ribosomal subunit. Contacts protein L29.

Its function is as follows. Binds to 23S rRNA. One of the proteins that surrounds the polypeptide exit tunnel on the outside of the ribosome. This is Large ribosomal subunit protein uL23 from Methanopyrus kandleri (strain AV19 / DSM 6324 / JCM 9639 / NBRC 100938).